The following is a 652-amino-acid chain: DNA ligase (652 aa).

NAD(+)-binding positions include 29–33 (DSEYD), 78–79 (SL), and Glu107. Lys109 acts as the N6-AMP-lysine intermediate in catalysis. NAD(+)-binding residues include Arg130, Glu164, Lys278, and Lys302. Zn(2+)-binding residues include Cys395, Cys398, Cys413, and Cys418. Positions 577 to 652 (VADAALSGLT…VRDEAWLESL (76 aa)) constitute a BRCT domain.

This sequence belongs to the NAD-dependent DNA ligase family. LigA subfamily. Mg(2+) serves as cofactor. Requires Mn(2+) as cofactor.

It carries out the reaction NAD(+) + (deoxyribonucleotide)n-3'-hydroxyl + 5'-phospho-(deoxyribonucleotide)m = (deoxyribonucleotide)n+m + AMP + beta-nicotinamide D-nucleotide.. DNA ligase that catalyzes the formation of phosphodiester linkages between 5'-phosphoryl and 3'-hydroxyl groups in double-stranded DNA using NAD as a coenzyme and as the energy source for the reaction. It is essential for DNA replication and repair of damaged DNA. This Streptococcus pneumoniae serotype 2 (strain D39 / NCTC 7466) protein is DNA ligase.